We begin with the raw amino-acid sequence, 279 residues long: Zinc-finger homeodomain protein 1 (279 aa).

Positions 1–13 (MDFDDHDDGDEEM) are enriched in acidic residues. The tract at residues 1-47 (MDFDDHDDGDEEMPPMPVSSSYETPPQHGLAGGGMAPKPPGEIGSRV) is disordered. A ZF-HD dimerization-type; degenerate zinc finger spans residues 57 to 106 (YRECLKNHAVGIGGHAVDGCGEFMAAGEEGTIDALRCAACNCHRNFHRKE). A disordered region spans residues 168 to 190 (RPLALPSTSHSGRDDGDDLSGMV). Residues 215–278 (KKRFRTKFTQ…NNKHTLGKKL (64 aa)) constitute a DNA-binding region (homeobox).

In terms of assembly, homo- and heterodimer with other ZFHD proteins.

The protein resides in the nucleus. In terms of biological role, putative transcription factor. The sequence is that of Zinc-finger homeodomain protein 1 (ZHD1) from Oryza sativa subsp. japonica (Rice).